A 351-amino-acid chain; its full sequence is Protein RecA (351 aa).

Position 68–75 (68–75 (GPESSGKT)) interacts with ATP.

Belongs to the RecA family.

It localises to the cytoplasm. Functionally, can catalyze the hydrolysis of ATP in the presence of single-stranded DNA, the ATP-dependent uptake of single-stranded DNA by duplex DNA, and the ATP-dependent hybridization of homologous single-stranded DNAs. It interacts with LexA causing its activation and leading to its autocatalytic cleavage. In Chloroflexus aggregans (strain MD-66 / DSM 9485), this protein is Protein RecA.